A 151-amino-acid chain; its full sequence is Ribosome maturation factor RimP (151 aa).

Belongs to the RimP family.

It localises to the cytoplasm. Functionally, required for maturation of 30S ribosomal subunits. This is Ribosome maturation factor RimP from Haemophilus influenzae (strain PittEE).